The chain runs to 140 residues: Large ribosomal subunit protein uL16 (140 aa).

Belongs to the universal ribosomal protein uL16 family. In terms of assembly, part of the 50S ribosomal subunit.

Functionally, binds 23S rRNA and is also seen to make contacts with the A and possibly P site tRNAs. This chain is Large ribosomal subunit protein uL16, found in Geotalea uraniireducens (strain Rf4) (Geobacter uraniireducens).